We begin with the raw amino-acid sequence, 409 residues long: Serine/threonine transporter SstT (409 aa).

A run of 9 helical transmembrane segments spans residues 14 to 34, 48 to 68, 82 to 102, 141 to 161, 192 to 212, 216 to 236, 290 to 310, 322 to 342, and 357 to 377; these read GSLVLQILVGIIAGIIVATLS, FVGALKAIAPILVFILVAASI, IVILYLFGTFAAAVTAVLMSF, ALMTGNYIGILAWGVGLGLAL, IGIFGLVSSTFASTGFSAIAG, LLLVLLGAMAIMALIINPAIV, IPLGATINMGGAAITITILTL, ILTAILLSVVAGISACGASGV, and FGISNDIAMQVVAVGFIIGVI.

This sequence belongs to the dicarboxylate/amino acid:cation symporter (DAACS) (TC 2.A.23) family.

The protein localises to the cell inner membrane. It catalyses the reaction L-serine(in) + Na(+)(in) = L-serine(out) + Na(+)(out). The enzyme catalyses L-threonine(in) + Na(+)(in) = L-threonine(out) + Na(+)(out). Involved in the import of serine and threonine into the cell, with the concomitant import of sodium (symport system). The chain is Serine/threonine transporter SstT from Shewanella woodyi (strain ATCC 51908 / MS32).